Here is a 232-residue protein sequence, read N- to C-terminus: NAD(P)H-quinone oxidoreductase subunit K 1 (232 aa).

Residues cysteine 49, cysteine 50, cysteine 114, and cysteine 145 each contribute to the [4Fe-4S] cluster site.

This sequence belongs to the complex I 20 kDa subunit family. As to quaternary structure, NDH-1 can be composed of about 15 different subunits; different subcomplexes with different compositions have been identified which probably have different functions. It depends on [4Fe-4S] cluster as a cofactor.

It is found in the cellular thylakoid membrane. It catalyses the reaction a plastoquinone + NADH + (n+1) H(+)(in) = a plastoquinol + NAD(+) + n H(+)(out). It carries out the reaction a plastoquinone + NADPH + (n+1) H(+)(in) = a plastoquinol + NADP(+) + n H(+)(out). In terms of biological role, NDH-1 shuttles electrons from an unknown electron donor, via FMN and iron-sulfur (Fe-S) centers, to quinones in the respiratory and/or the photosynthetic chain. The immediate electron acceptor for the enzyme in this species is believed to be plastoquinone. Couples the redox reaction to proton translocation, and thus conserves the redox energy in a proton gradient. Cyanobacterial NDH-1 also plays a role in inorganic carbon-concentration. The polypeptide is NAD(P)H-quinone oxidoreductase subunit K 1 (Acaryochloris marina (strain MBIC 11017)).